The chain runs to 578 residues: Hyaluronan synthase 1 (578 aa).

Over 1 to 25 the chain is Cytoplasmic; that stretch reads MRQQDAPKPTPAACRCSGLARRVLT. A helical transmembrane segment spans residues 26-46; the sequence is IAFALLILGLMTWAYAAGVPL. Residues 47–52 are Extracellular-facing; that stretch reads ASDRYG. A helical membrane pass occupies residues 53–73; the sequence is LLAFGLYGAFLSAHLVAQSLF. Over 74-399 the chain is Cytoplasmic; it reads AYLEHRRVAA…NALWWHRHHA (326 aa). The chain crosses the membrane as a helical span at residues 400 to 420; it reads WMTYEAVVSGLFPFFVAATVL. Residues 421–430 are Extracellular-facing; that stretch reads RLFYAGRPWA. A helical membrane pass occupies residues 431 to 451; the sequence is LLWVLLCVQGVALAKAAFAAW. Over 452–457 the chain is Cytoplasmic; sequence LRGCLR. A helical transmembrane segment spans residues 458–478; sequence MVLLSLYAPLYMCGLLPAKFL. The Extracellular portion of the chain corresponds to 479 to 497; it reads ALVTMNQSGWGTSGRRKLA. The helical transmembrane segment at 498–518 threads the bilayer; that stretch reads ANYVPLLPLALWALLLLGGLV. Topologically, residues 519–540 are cytoplasmic; sequence RSVAHEARADWSGPSRAAEAYH. A helical membrane pass occupies residues 541 to 561; the sequence is LAAGAGAYVGYWVAMLTLYWV. At 562–578 the chain is on the extracellular side; it reads GVRRLCRRRTGGYRVQV.

This sequence belongs to the NodC/HAS family. It depends on Mg(2+) as a cofactor. In terms of tissue distribution, widely expressed. Highly expressed in ovary followed by spleen, thymus, prostate, testes and large intestine. Weakly expressed in small intestine.

The protein resides in the membrane. The enzyme catalyses [hyaluronan](n) + UDP-N-acetyl-alpha-D-glucosamine = N-acetyl-beta-D-glucosaminyl-(1-&gt;4)-[hyaluronan](n) + UDP + H(+). It catalyses the reaction N-acetyl-beta-D-glucosaminyl-(1-&gt;4)-[hyaluronan](n) + UDP-alpha-D-glucuronate = [hyaluronan](n+1) + UDP + H(+). It functions in the pathway glycan biosynthesis; hyaluronan biosynthesis. Its function is as follows. Catalyzes the addition of GlcNAc or GlcUA monosaccharides to the nascent hyaluronan polymer. Therefore, it is essential to hyaluronan synthesis a major component of most extracellular matrices that has a structural role in tissues architectures and regulates cell adhesion, migration and differentiation. This is one of the isozymes catalyzing that reaction. Also able to catalyze the synthesis of chito-oligosaccharide depending on the substrate. This Homo sapiens (Human) protein is Hyaluronan synthase 1 (HAS1).